The primary structure comprises 714 residues: Sodium-dependent acetylcholine transporter (714 aa).

The tract at residues 1 to 21 (MSVSSNDPEQRNGRGMASGNN) is disordered. At 1 to 74 (MSVSSNDPEQ…GNWSNKSDYL (74 aa)) the chain is on the cytoplasmic side. Transmembrane regions (helical) follow at residues 75 to 95 (LAVI…FLVF), 100 to 120 (AAFL…MFFM), and 152 to 172 (ISGF…FYLI). Residues 173-257 (NSFSFSIPWS…LSKGVDDFGT (85 aa)) are Extracellular-facing. 4 N-linked (GlcNAc...) asparagine glycosylation sites follow: asparagine 192, asparagine 205, asparagine 211, and asparagine 222. Transmembrane regions (helical) follow at residues 258 to 278 (LNWY…LCLF), 287 to 307 (VVYV…TRLL), 336 to 356 (AAVQ…TIAS), 368 to 388 (IWLV…LTFS), 422 to 442 (AGVS…LLVV), 476 to 496 (VCAL…LFWM), 502 to 522 (FVLT…INWV), 548 to 568 (ILFK…LWLD), and 584 to 604 (ILTA…VGIW). Over 605-714 (QFCIAKGTIT…IPKFERETAI (110 aa)) the chain is Cytoplasmic.

Belongs to the sodium:neurotransmitter symporter (SNF) (TC 2.A.22) family. As to quaternary structure, interacts with stn-1; part of the DGC. Body wall, and vulval and enteric muscles.

The protein localises to the cell membrane. It is found in the postsynaptic cell membrane. Its function is as follows. Mediates sodium-dependent uptake of acetylcholine at neuromuscular junctions during periods of increased synaptic activity, may also prevent spillover to adjacent synaptic sites. Not involved in the uptake of other neurotransmitters (GABA, glycine, proline and glutamate) and there was also no inhibition of uptake by adding an excess of other candidate substrates (GABA, glycine, taurine, creatine, proline, alanine, carnitine, glutamate and betaine). Required for muscle integrity; altered transport of acetylcholine due to loss of dystrophin-glycoprotein complex (DGC) function results in muscle degeneration. This Caenorhabditis elegans protein is Sodium-dependent acetylcholine transporter.